We begin with the raw amino-acid sequence, 135 residues long: UPF0355 protein SACOL0457 (135 aa).

Belongs to the UPF0355 family.

The sequence is that of UPF0355 protein SACOL0457 from Staphylococcus aureus (strain COL).